The following is a 259-amino-acid chain: Ribonuclease HII (259 aa).

Positions 70–258 (TLIVGIDEVG…VKSLVLGKKE (189 aa)) constitute an RNase H type-2 domain. A divalent metal cation-binding residues include Asp76, Glu77, and Asp168.

Belongs to the RNase HII family. The cofactor is Mn(2+). Mg(2+) serves as cofactor.

The protein localises to the cytoplasm. It catalyses the reaction Endonucleolytic cleavage to 5'-phosphomonoester.. In terms of biological role, endonuclease that specifically degrades the RNA of RNA-DNA hybrids. The polypeptide is Ribonuclease HII (Streptococcus pneumoniae (strain ATCC 700669 / Spain 23F-1)).